We begin with the raw amino-acid sequence, 636 residues long: Zinc finger protein 90 (636 aa).

Residues 14 to 85 enclose the KRAB domain; sequence VTFKDVAVNF…EKEIQRPFCP (72 aa). 7 C2H2-type zinc fingers span residues 208–230, 250–272, 278–300, 306–328, 334–356, 362–384, and 390–412; these read YKCD…EKIH, HECA…QRIH, FECN…ENAH, YQCS…QRIH, YRCN…EVTH, FQCK…ERTH, and FECS…MRIH. The interval 227-247 is disordered; the sequence is EKIHKGDPYSNGTDQGAQSGR. Residue lysine 444 forms a Glycyl lysine isopeptide (Lys-Gly) (interchain with G-Cter in SUMO2) linkage. 6 consecutive C2H2-type zinc fingers follow at residues 446–468, 494–516, 522–544, 550–572, 578–600, and 606–628; these read YHCN…QRLH, YQCN…HRIH, YECN…ERTH, YECI…ERTH, YECN…QRTH, and YACK…HRVH.

It belongs to the krueppel C2H2-type zinc-finger protein family. As to quaternary structure, interacts (via N- and C-termini) with REST (via zinc-finger DNA-binding domain); the interaction inhibits REST repressor activity. Brain, spleen, thymus, and testis. Expressed in heart.

The protein localises to the nucleus. Functionally, inhibits the transcriptional repressor activity of REST by inhibiting its binding to DNA, thereby derepressing transcription of REST target genes. The protein is Zinc finger protein 90 (Zfp90) of Mus musculus (Mouse).